Here is a 177-residue protein sequence, read N- to C-terminus: Large ribosomal subunit protein uL6 (177 aa).

The protein belongs to the universal ribosomal protein uL6 family. As to quaternary structure, part of the 50S ribosomal subunit.

In terms of biological role, this protein binds to the 23S rRNA, and is important in its secondary structure. It is located near the subunit interface in the base of the L7/L12 stalk, and near the tRNA binding site of the peptidyltransferase center. This is Large ribosomal subunit protein uL6 from Zymomonas mobilis subsp. mobilis (strain ATCC 31821 / ZM4 / CP4).